Here is a 150-residue protein sequence, read N- to C-terminus: uncharacterized protein (150 aa).

A Flavodoxin-like domain is found at 4-148; it reads LILYKSIHHK…KAKEFAKSIL (145 aa).

This is an uncharacterized protein from Methanocaldococcus jannaschii (strain ATCC 43067 / DSM 2661 / JAL-1 / JCM 10045 / NBRC 100440) (Methanococcus jannaschii).